Reading from the N-terminus, the 374-residue chain is MRSGRYIGVMSGTSLDGVDVVLAAIDENMVAQQASLSWPIPVELKQAVLDICQGQQLTLSQFGQLDTRLGILFADAVNGLLAQENLQPQDIVAIGCHGQTVWHEPQGPAPHTLQIGDNNQIVARTGITVVGDFRRRDIALGGQGAPLVPAFHHALLAHPTERRMVLNIGGIANLSMLLPGQPVRGYDTGPGNMLMDAWIWRQCAKPYDKDAQWACEGNVVLPLLQQMLNDPYFAAPAPKSTGREYFNYGWLERHLQKFPGLRSRDVQATLAELTAVTISEQVLLSGGCDRLMVCGGGSRNPLVMARLAGLLPGTEVTTTDTAGISGDDMEALAFAWLAWRTLAGLAGNLPSVTGASEATVLGAIFPANPPRTQS.

Residue 12–19 coordinates ATP; the sequence is GTSLDGVD.

The protein belongs to the anhydro-N-acetylmuramic acid kinase family.

It catalyses the reaction 1,6-anhydro-N-acetyl-beta-muramate + ATP + H2O = N-acetyl-D-muramate 6-phosphate + ADP + H(+). Its pathway is amino-sugar metabolism; 1,6-anhydro-N-acetylmuramate degradation. The protein operates within cell wall biogenesis; peptidoglycan recycling. Functionally, catalyzes the specific phosphorylation of 1,6-anhydro-N-acetylmuramic acid (anhMurNAc) with the simultaneous cleavage of the 1,6-anhydro ring, generating MurNAc-6-P. Is required for the utilization of anhMurNAc either imported from the medium or derived from its own cell wall murein, and thus plays a role in cell wall recycling. This is Anhydro-N-acetylmuramic acid kinase from Escherichia fergusonii (strain ATCC 35469 / DSM 13698 / CCUG 18766 / IAM 14443 / JCM 21226 / LMG 7866 / NBRC 102419 / NCTC 12128 / CDC 0568-73).